The following is a 215-amino-acid chain: MKKLLYITVNSKPEELSASKTVGRAFVNRFLEKHSDFEIEELDLYKCHIPRLEYEYFEKRSCLVNEDAFNKLDKKQQEEVHKIVKLTDQFKEADVYVIAAPMWSMSFPAPLKEYIDCIVMDGKTVDIKDGEKPEGLLNDKPRGAVYIQSSGAKMNVLLKVVMDKGVHYIESIMKFMGIEKFEELLVDGTGTTEEEKNKAIEKAFEKIDSVIDGIW.

Residue 17–19 participates in FMN binding; it reads SAS.

It belongs to the azoreductase type 1 family. Homodimer. FMN serves as cofactor.

The enzyme catalyses 2 a quinone + NADH + H(+) = 2 a 1,4-benzosemiquinone + NAD(+). The catalysed reaction is N,N-dimethyl-1,4-phenylenediamine + anthranilate + 2 NAD(+) = 2-(4-dimethylaminophenyl)diazenylbenzoate + 2 NADH + 2 H(+). Quinone reductase that provides resistance to thiol-specific stress caused by electrophilic quinones. Functionally, also exhibits azoreductase activity. Catalyzes the reductive cleavage of the azo bond in aromatic azo compounds to the corresponding amines. The polypeptide is FMN-dependent NADH:quinone oxidoreductase (Clostridium botulinum (strain Eklund 17B / Type B)).